The chain runs to 73 residues: Translation initiation factor IF-1 (73 aa).

The S1-like domain occupies 1 to 73 (MPKKDGVIEI…SRGRIVYRYK (73 aa)).

It belongs to the IF-1 family. As to quaternary structure, component of the 30S ribosomal translation pre-initiation complex which assembles on the 30S ribosome in the order IF-2 and IF-3, IF-1 and N-formylmethionyl-tRNA(fMet); mRNA recruitment can occur at any time during PIC assembly.

Its subcellular location is the cytoplasm. Functionally, one of the essential components for the initiation of protein synthesis. Stabilizes the binding of IF-2 and IF-3 on the 30S subunit to which N-formylmethionyl-tRNA(fMet) subsequently binds. Helps modulate mRNA selection, yielding the 30S pre-initiation complex (PIC). Upon addition of the 50S ribosomal subunit IF-1, IF-2 and IF-3 are released leaving the mature 70S translation initiation complex. This chain is Translation initiation factor IF-1, found in Kineococcus radiotolerans (strain ATCC BAA-149 / DSM 14245 / SRS30216).